A 558-amino-acid polypeptide reads, in one-letter code: MEIILFLTMMVMIAYVFSGYLYRVALVQSSRVDLIFTRFENMCFKIIGTDLEHMSAKTYVKHFLAFNGFMGVITFVLLIVQQWLFLNPNHNLNQSIDLAFNTAISFLTNSNLQHYNGESGVTYLTQMIVMTYLMFTSSASGYAVCIAMLRRLTGLTNIIGNFYQDIVRFIVRVLLPLSCLISILLMTQGVPQTLHANLMIRTLSGHIQHIAFGPIASLESIKHLGTNGGGFLAGNSATPFENPNIWSNFIEMGSMMLLPMSMLFLFGRMLSRHGKRVHRHALILFVAMFFIFIAILTLTMWSEYRGNPILANLGIHGANMEGKEVRFGAGLSALFTVITTAFTTGSVNNMHDSLTPLGGLGPMVLMMLNVVFGGEGVGLMNLLIYVLLTLFICSLMVGKTPEYLNMPIGAREMKCIVLVFLIHPILILVFSALAFMIPGASESITNPSFHGISQVMYEMTSAAANNGSGFEGLKDDTTFWNISTGIIMLLSRYIPIILQLMISSSLVNKKSYHQDKHTIAIDKPYFGVSLIVFIVLLSGLTFIPVLLLGPIGEFLTLK.

12 helical membrane passes run 1-21 (MEII…SGYL), 66-86 (FNGF…WLFL), 127-147 (MIVM…VCIA), 166-186 (IVRF…ILLM), 245-265 (IWSN…MLFL), 281-301 (ALIL…LTMW), 327-347 (FGAG…TGSV), 354-374 (LTPL…VFGG), 377-397 (VGLM…SLMV), 416-436 (IVLV…LAFM), 482-502 (ISTG…QLMI), and 531-551 (IVFI…LGPI).

This sequence belongs to the KdpA family. The system is composed of three essential subunits: KdpA, KdpB and KdpC.

It localises to the cell membrane. Its function is as follows. Part of the high-affinity ATP-driven potassium transport (or Kdp) system, which catalyzes the hydrolysis of ATP coupled with the electrogenic transport of potassium into the cytoplasm. This subunit binds the extracellular potassium ions and delivers the ions to the membrane domain of KdpB through an intramembrane tunnel. The sequence is that of Potassium-transporting ATPase potassium-binding subunit 1 from Staphylococcus aureus (strain MRSA252).